The primary structure comprises 422 residues: Histidine--tRNA ligase (422 aa).

Belongs to the class-II aminoacyl-tRNA synthetase family. Homodimer.

It localises to the cytoplasm. The catalysed reaction is tRNA(His) + L-histidine + ATP = L-histidyl-tRNA(His) + AMP + diphosphate + H(+). In Vibrio atlanticus (strain LGP32) (Vibrio splendidus (strain Mel32)), this protein is Histidine--tRNA ligase.